Here is a 680-residue protein sequence, read N- to C-terminus: Probable potassium transport system protein Kup (680 aa).

The next 12 membrane-spanning stretches (helical) occupy residues 16-36, 60-80, 103-123, 150-170, 177-197, 222-242, 255-275, 302-322, 351-371, 380-400, 407-427, and 432-452; these read IAGM…SPLY, ISLV…LIAL, WLVI…MLTP, EVII…KFGT, FGPI…MNLM, VGIL…ALYS, SWPY…VWLL, IPAI…LISG, LYIS…VFYF, AYGL…FHYL, WFLA…FFIA, and FMHG…IMFV.

This sequence belongs to the HAK/KUP transporter (TC 2.A.72) family.

Its subcellular location is the cell membrane. It carries out the reaction K(+)(in) + H(+)(in) = K(+)(out) + H(+)(out). Functionally, transport of potassium into the cell. Likely operates as a K(+):H(+) symporter. The protein is Probable potassium transport system protein Kup of Latilactobacillus sakei subsp. sakei (strain 23K) (Lactobacillus sakei subsp. sakei).